The primary structure comprises 267 residues: Tryptophan synthase alpha chain (267 aa).

Catalysis depends on proton acceptor residues Glu49 and Asp60.

This sequence belongs to the TrpA family. As to quaternary structure, tetramer of two alpha and two beta chains.

It catalyses the reaction (1S,2R)-1-C-(indol-3-yl)glycerol 3-phosphate + L-serine = D-glyceraldehyde 3-phosphate + L-tryptophan + H2O. Its pathway is amino-acid biosynthesis; L-tryptophan biosynthesis; L-tryptophan from chorismate: step 5/5. The alpha subunit is responsible for the aldol cleavage of indoleglycerol phosphate to indole and glyceraldehyde 3-phosphate. This chain is Tryptophan synthase alpha chain, found in Acaryochloris marina (strain MBIC 11017).